A 267-amino-acid chain; its full sequence is tRNA pseudouridine synthase A (267 aa).

Aspartate 51 serves as the catalytic Nucleophile. Tyrosine 109 contributes to the substrate binding site.

The protein belongs to the tRNA pseudouridine synthase TruA family. Homodimer.

It carries out the reaction uridine(38/39/40) in tRNA = pseudouridine(38/39/40) in tRNA. In terms of biological role, formation of pseudouridine at positions 38, 39 and 40 in the anticodon stem and loop of transfer RNAs. The protein is tRNA pseudouridine synthase A of Staphylococcus aureus (strain MSSA476).